A 523-amino-acid chain; its full sequence is Probable endopeptidase p60 (523 aa).

Positions 1 to 27 (MNMKKATIAATAGIAVTAFAAPTIASA) are cleaved as a signal peptide. The region spanning 28 to 71 (STVVVEAGDTLWGIAQDNGTTVDALKKANKLTTDKIVPGQKLQV) is the LysM 1 domain. Positions 78–142 (KTEKSVSATW…VNGKYLGNAV (65 aa)) constitute an SH3b domain. The segment at 146 to 188 (PSATPEVKQEETTQAAPAQQTKTEVKQATPAATTEKDAVETKT) is disordered. Positions 157–167 (TTQAAPAQQTK) are enriched in low complexity. One can recognise a LysM 2 domain in the interval 198 to 241 (TTHTVKSGDTIWALSVKYGASVQDLMSWNNLSSSSIYVGQNIAV). 2 stretches are compositionally biased toward low complexity: residues 251-282 (PKAEAKTEAPAAEKQTAAPVVKESTNTSTTTT) and 290-318 (EKQTSTTKAPAQAAKPAPAPAPTVNTNAS). Disordered stretches follow at residues 251-323 (PKAE…YTVK) and 367-408 (ATNT…SSSA). The LysM 3 domain occupies 318 to 361 (SSYTVKSGDTLGKIASTFGTTVSKIKALNGLTSDNLQVGDVLKV). Residues 405–523 (SSSASAIIAE…GQYLVGFGRV (119 aa)) form the NlpC/P60 domain. Cys-435 acts as the Nucleophile in catalysis. His-485 acts as the Proton acceptor in catalysis. Residue Asn-497 is part of the active site.

Belongs to the peptidase C40 family.

Its function is as follows. This major extracellular protein may be involved in the invasion of non-professional phagocytic cells by Listeria. The polypeptide is Probable endopeptidase p60 (iap) (Listeria seeligeri).